Here is a 702-residue protein sequence, read N- to C-terminus: Polyribonucleotide nucleotidyltransferase 2 (702 aa).

Residues Asp-483 and Asp-489 each contribute to the Mg(2+) site. Positions 550–609 (PQVTKLKVHPDKVREVIGAGGKVINKIIDETGVKINIENDGTIYIAAPDQESARVALEMI) constitute a KH domain. In terms of domain architecture, S1 motif spans 619 to 687 (GEVYTGKVIK…PQGKIGLSRK (69 aa)).

This sequence belongs to the polyribonucleotide nucleotidyltransferase family. It depends on Mg(2+) as a cofactor.

The protein resides in the cytoplasm. It carries out the reaction RNA(n+1) + phosphate = RNA(n) + a ribonucleoside 5'-diphosphate. Its function is as follows. Involved in mRNA degradation. Catalyzes the phosphorolysis of single-stranded polyribonucleotides processively in the 3'- to 5'-direction. In Alkaliphilus metalliredigens (strain QYMF), this protein is Polyribonucleotide nucleotidyltransferase 2.